The following is a 610-amino-acid chain: Transducer of Cdc42-dependent actin assembly protein 2 homolog (610 aa).

The region spanning Met-1–Asp-267 is the F-BAR domain. The tract at residues Ala-283 to Ser-315 is disordered. Residues Gly-291–Asp-302 show a composition bias toward basic and acidic residues. The 78-residue stretch at Ser-352–Met-429 folds into the REM-1 domain. Residues Ala-355 to Arg-385 adopt a coiled-coil conformation. Disordered stretches follow at residues Glu-436–Asn-487 and Leu-499–Glu-519. Over residues Gly-437 to Asp-449 the composition is skewed to basic and acidic residues. Residues Ser-453 to Ser-464 are compositionally biased toward low complexity. Over residues Ala-475 to Asn-487 the composition is skewed to polar residues. Residues Ser-501 to Pro-513 show a composition bias toward low complexity. An SH3 domain is found at Glu-547–Gln-610.

It belongs to the FNBP1 family. In terms of assembly, interacts (via SH3 domain) with wsp-1 and abi-1. Interacts with cdc-42 and (via SH3 domain) with wve-1.

The protein resides in the cell junction. The protein localises to the cell membrane. It is found in the cytoplasmic vesicle. It localises to the cytoplasm. Its subcellular location is the recycling endosome. Its function is as follows. Plays a role in protein trafficking, actin organization and embryonic morphogenesis. Potentially acts as a cdc-42 effector. May play a role in egg laying. Together with toca-1, is required for protein trafficking regulating yolk protein clathrin-mediated endocytosis by oocytes during oogenesis and retrograde recycling and the sorting of recycling endosome cargo proteins such as mig-14. Also, together with toca-2, controls the distribution of actin at cell junctions. This Caenorhabditis elegans protein is Transducer of Cdc42-dependent actin assembly protein 2 homolog.